The chain runs to 1328 residues: Tubulin polyglutamylase TTLL5 (1328 aa).

The interval Met-1–Ala-22 is disordered. Residues Arg-62–Ser-407 enclose the TTL domain. Residues Lys-180, Arg-186–Gly-187, Ser-208–Ile-211, and Lys-221–Asp-223 each bind ATP. Residue Arg-186 participates in a protein binding. L-glutamate is bound at residue Arg-247. ATP is bound at residue Thr-268–Asn-269. Positions 270, 271, and 293 each coordinate L-glutamate. Positions 353, 366, and 368 each coordinate Mg(2+). Residues Pro-378–Thr-488 form a c-MTBD region region. Lys-384 is a binding site for L-glutamate. Disordered regions lie at residues Ile-411–Asp-436, Ala-585–Tyr-631, His-834–His-853, Pro-948–Leu-975, Ser-1006–Asp-1032, Arg-1085–Gly-1129, and Arg-1212–Gly-1271. Residues Arg-420–Leu-432 are compositionally biased toward polar residues. Residues Glu-597–Gln-617 show a composition bias toward acidic residues. Residues Ser-838–Ser-847 are compositionally biased toward low complexity. Composition is skewed to polar residues over residues Thr-1116–Thr-1128, Ser-1214–Pro-1227, Pro-1234–Lys-1248, and Gln-1257–Gly-1271.

This sequence belongs to the tubulin--tyrosine ligase family. In terms of assembly, interacts with the transcriptional coactivators NCOA1/SRC-1 and NCOA2/TIF2. Requires Mg(2+) as cofactor. As to expression, highly expressed in brain, kidney, liver, spleen and testis. Expressed in heart, lung, muscle and trachea.

The protein resides in the cell projection. It is found in the cilium. The protein localises to the cytoplasm. Its subcellular location is the cytoskeleton. It localises to the cilium basal body. The protein resides in the nucleus. It carries out the reaction L-glutamyl-[protein] + L-glutamate + ATP = gamma-L-glutamyl-L-glutamyl-[protein] + ADP + phosphate + H(+). The enzyme catalyses (L-glutamyl)(n)-gamma-L-glutamyl-L-glutamyl-[protein] + L-glutamate + ATP = (L-glutamyl)(n+1)-gamma-L-glutamyl-L-glutamyl-[protein] + ADP + phosphate + H(+). Polyglutamylase which modifies tubulin, generating polyglutamate side chains on the gamma-carboxyl group of specific glutamate residues within the C-terminal tail of tubulin. Preferentially mediates ATP-dependent initiation step of the polyglutamylation reaction over the elongation step. Preferentially modifies the alpha-tubulin tail over a beta-tail. Required for CCSAP localization to both polyglutamylated spindle and cilia microtubules. Increases the effects of transcriptional coactivator NCOA2/TIF2 in glucocorticoid receptor-mediated repression and induction and in androgen receptor-mediated induction. The protein is Tubulin polyglutamylase TTLL5 of Mus musculus (Mouse).